The sequence spans 306 residues: Heterogeneous nuclear ribonucleoproteins C1/C2 (306 aa).

Ala-2 carries the post-translational modification N-acetylalanine. Glycyl lysine isopeptide (Lys-Gly) (interchain with G-Cter in SUMO2) cross-links involve residues Lys-8, Lys-50, Lys-89, and Lys-94. The region spanning 16–87 is the RRM domain; it reads SRVFIGNLNT…QVLDINLAAE (72 aa). A phosphoserine mark is found at Ser-107 and Val-108. Thr-109 is modified (phosphothreonine). A phosphoserine mark is found at Ser-113, Ser-115, and Ser-121. 2 disordered regions span residues 139 to 190 and 221 to 306; these read YPAR…KLKG and QSKQ…EDDS. The Nuclear localization signal motif lies at 155 to 161; that stretch reads PSKRQRV. Ser-162 and Ser-166 each carry phosphoserine. Residues 175 to 185 are compositionally biased toward low complexity; the sequence is SKSGQRGSSKS. Lys-176 carries the post-translational modification N6-acetyllysine; alternate. Residue Lys-176 forms a Glycyl lysine isopeptide (Lys-Gly) (interchain with G-Cter in SUMO2); alternate linkage. Positions 190–238 form a coiled coil; that stretch reads GDDLQAIKKELTQIKQKVDSLLENLEKIEKEQSKQAVEMKNDKSEEEQS. The segment covering 221–232 has biased composition (basic and acidic residues); that stretch reads QSKQAVEMKNDK. Glycyl lysine isopeptide (Lys-Gly) (interchain with G-Cter in SUMO2) cross-links involve residues Lys-223 and Lys-229. Residue Lys-232 forms a Glycyl lysine isopeptide (Lys-Gly) (interchain with G-Cter in SUMO2); alternate linkage. Lys-232 participates in a covalent cross-link: Glycyl lysine isopeptide (Lys-Gly) (interchain with G-Cter in SUMO1); alternate. Ser-233, Ser-238, Ser-239, and Ser-241 each carry phosphoserine. Basic and acidic residues predominate over residues 242 to 253; the sequence is VKKDETNVKMES. Glycyl lysine isopeptide (Lys-Gly) (interchain with G-Cter in SUMO2) cross-links involve residues Lys-243 and Lys-244. Residue Lys-250 forms a Glycyl lysine isopeptide (Lys-Gly) (interchain with G-Cter in SUMO2); alternate linkage. Residue Lys-250 forms a Glycyl lysine isopeptide (Lys-Gly) (interchain with G-Cter in SUMO); alternate linkage. Phosphoserine occurs at positions 253 and 260. Acidic residues predominate over residues 255–276; sequence GGADDSAEEGDLLDDDDNEDRG. Basic and acidic residues predominate over residues 277–287; the sequence is DDQLELIKDDE. Over residues 288-306 the composition is skewed to acidic residues; it reads KEAEEGEDDRDSANGEDDS. Residues Ser-299 and Ser-306 each carry the phosphoserine modification.

It belongs to the RRM HNRPC family. RALY subfamily. In terms of assembly, tetramer composed of 3 copies of isoform C1 and 1 copy of isoform C2. Assembly of 3 tetramers with bound pre-mRNA gives rise to a 19S complex that interacts with HNRNPA2B1 tetramers. Component of the 40S hnRNP particle. Identified in the spliceosome C complex. Interacts with IGF2BP1. Interacts with DHX9; this interaction is direct, enhanced probably by their concomitant binding to RNA and mediates the attachment to actin filaments. Interacts with PPIA/CYPA. Interacts with YWHAE. In terms of processing, phosphorylated on Ser-260 and Ser-299 in resting cells. Phosphorylated on Ser-253 and on 1 serine residue in the poly-Ser stretch at position 238 in response to hydrogen peroxide. Sumoylated. Sumoylation reduces affinity for mRNA. Post-translationally, ubiquitinated and degraded after nucleo-cytoplasmic transport by YWHAE.

It is found in the nucleus. In terms of biological role, binds pre-mRNA and nucleates the assembly of 40S hnRNP particles. Interacts with poly-U tracts in the 3'-UTR or 5'-UTR of mRNA and modulates the stability and the level of translation of bound mRNA molecules. Single HNRNPC tetramers bind 230-240 nucleotides. Trimers of HNRNPC tetramers bind 700 nucleotides. May play a role in the early steps of spliceosome assembly and pre-mRNA splicing. N6-methyladenosine (m6A) has been shown to alter the local structure in mRNAs and long non-coding RNAs (lncRNAs) via a mechanism named 'm(6)A-switch', facilitating binding of HNRNPC, leading to regulation of mRNA splicing. The polypeptide is Heterogeneous nuclear ribonucleoproteins C1/C2 (HNRNPC) (Homo sapiens (Human)).